A 228-amino-acid chain; its full sequence is Isoprenyl transferase (228 aa).

The active site involves Asp9. Position 9 (Asp9) interacts with Mg(2+). Residues 10 to 13 (GNGR), Trp14, Arg22, His26, and 54 to 56 (STE) each bind substrate. Catalysis depends on Asn57, which acts as the Proton acceptor. Residues Trp58, Arg60, Arg175, and 181 to 183 (RMS) contribute to the substrate site. A Mg(2+)-binding site is contributed by Glu194.

It belongs to the UPP synthase family. In terms of assembly, homodimer. Mg(2+) serves as cofactor.

Catalyzes the condensation of isopentenyl diphosphate (IPP) with allylic pyrophosphates generating different type of terpenoids. The protein is Isoprenyl transferase of Treponema pallidum (strain Nichols).